The sequence spans 127 residues: Fatty acid binding protein 1-A, liver (127 aa).

Belongs to the calycin superfamily. Fatty-acid binding protein (FABP) family. In adults, weakly expressed in the intestine.

The protein resides in the cytoplasm. In terms of biological role, binds free fatty acids and their coenzyme A derivatives, bilirubin, and some other small molecules in the cytoplasm. May be involved in intracellular lipid transport. This Danio rerio (Zebrafish) protein is Fatty acid binding protein 1-A, liver.